The primary structure comprises 149 residues: Hut operon positive regulatory protein (149 aa).

This sequence belongs to the HutP family. As to quaternary structure, homohexamer.

Functionally, antiterminator that binds to cis-acting regulatory sequences on the mRNA in the presence of histidine, thereby suppressing transcription termination and activating the hut operon for histidine utilization. The sequence is that of Hut operon positive regulatory protein from Geobacillus thermodenitrificans (strain NG80-2).